Reading from the N-terminus, the 278-residue chain is Cytidine kinase (278 aa).

203-208 (TRGEKG) contributes to the ATP binding site. Aspartate 237 acts as the Proton acceptor in catalysis.

It belongs to the carbohydrate kinase PfkB family. It depends on Mg(2+) as a cofactor.

The enzyme catalyses cytidine + ATP = CMP + ADP + H(+). Involved in nucleoside degradation. Phosphorylates cytidine to CMP. Can also act on deoxycytidine and uridine, but is most active with cytidine. ATP is the most preferred phosphate donor, but it can also use GTP, CTP or UTP. The protein is Cytidine kinase of Thermococcus kodakarensis (strain ATCC BAA-918 / JCM 12380 / KOD1) (Pyrococcus kodakaraensis (strain KOD1)).